A 318-amino-acid polypeptide reads, in one-letter code: Gamma-glutamyl hydrolase (318 aa).

The N-terminal stretch at M1–S24 is a signal peptide. Residues R25–D318 enclose the Gamma-glutamyl hydrolase domain. N116 carries an N-linked (GlcNAc...) asparagine glycan. C134 serves as the catalytic Nucleophile. N-linked (GlcNAc...) asparagine glycosylation is found at N163 and N203. The Proton donor role is filled by H244. An N-linked (GlcNAc...) asparagine; partial glycan is attached at N307.

This sequence belongs to the peptidase C26 family. Homodimer.

The protein resides in the secreted. It localises to the extracellular space. Its subcellular location is the lysosome. The protein localises to the melanosome. The catalysed reaction is (6S)-5,6,7,8-tetrahydrofolyl-(gamma-L-Glu)(n) + (n-1) H2O = (6S)-5,6,7,8-tetrahydrofolate + (n-1) L-glutamate. Its function is as follows. Hydrolyzes the polyglutamate sidechains of pteroylpolyglutamates. Progressively removes gamma-glutamyl residues from pteroylpoly-gamma-glutamate to yield pteroyl-alpha-glutamate (folic acid) and free glutamate. May play an important role in the bioavailability of dietary pteroylpolyglutamates and in the metabolism of pteroylpolyglutamates and antifolates. This is Gamma-glutamyl hydrolase from Homo sapiens (Human).